The following is a 600-amino-acid chain: Dihydroxy-acid dehydratase (600 aa).

D82 lines the Mg(2+) pocket. C123 provides a ligand contact to [2Fe-2S] cluster. Mg(2+)-binding residues include D124 and K125. Position 125 is an N6-carboxylysine (K125). Residue C192 coordinates [2Fe-2S] cluster. E489 serves as a coordination point for Mg(2+). The active-site Proton acceptor is the S515.

This sequence belongs to the IlvD/Edd family. Homodimer. Requires [2Fe-2S] cluster as cofactor. The cofactor is Mg(2+).

The enzyme catalyses (2R)-2,3-dihydroxy-3-methylbutanoate = 3-methyl-2-oxobutanoate + H2O. It carries out the reaction (2R,3R)-2,3-dihydroxy-3-methylpentanoate = (S)-3-methyl-2-oxopentanoate + H2O. Its pathway is amino-acid biosynthesis; L-isoleucine biosynthesis; L-isoleucine from 2-oxobutanoate: step 3/4. The protein operates within amino-acid biosynthesis; L-valine biosynthesis; L-valine from pyruvate: step 3/4. Functionally, functions in the biosynthesis of branched-chain amino acids. Catalyzes the dehydration of (2R,3R)-2,3-dihydroxy-3-methylpentanoate (2,3-dihydroxy-3-methylvalerate) into 2-oxo-3-methylpentanoate (2-oxo-3-methylvalerate) and of (2R)-2,3-dihydroxy-3-methylbutanoate (2,3-dihydroxyisovalerate) into 2-oxo-3-methylbutanoate (2-oxoisovalerate), the penultimate precursor to L-isoleucine and L-valine, respectively. The chain is Dihydroxy-acid dehydratase from Phocaeicola vulgatus (strain ATCC 8482 / DSM 1447 / JCM 5826 / CCUG 4940 / NBRC 14291 / NCTC 11154) (Bacteroides vulgatus).